Here is a 95-residue protein sequence, read N- to C-terminus: Progonadoliberin-1 (95 aa).

A signal peptide spans 1–22; it reads MAPQTFALWLLLVGTLLGQGCC. The residue at position 23 (glutamine 23) is a Pyrrolidone carboxylic acid. Position 32 is a glycine amide (glycine 32).

It belongs to the GnRH family.

The protein resides in the secreted. Stimulates the secretion of gonadotropins. This Morone saxatilis (Striped bass) protein is Progonadoliberin-1 (gnrh1).